Consider the following 646-residue polypeptide: Phosphomethylpyrimidine synthase (646 aa).

Positions 1–13 (MNIRSNPDTTRPA) are enriched in polar residues. The tract at residues 1–21 (MNIRSNPDTTRPAVTTGGLPS) is disordered. Residues Asn-221, Met-250, Tyr-279, His-315, 335–337 (SRG), 376–379 (DGLR), and Glu-415 contribute to the substrate site. His-419 is a binding site for Zn(2+). Tyr-442 lines the substrate pocket. Residue His-483 participates in Zn(2+) binding. Cys-563, Cys-566, and Cys-571 together coordinate [4Fe-4S] cluster.

It belongs to the ThiC family. As to quaternary structure, homodimer. It depends on [4Fe-4S] cluster as a cofactor.

The enzyme catalyses 5-amino-1-(5-phospho-beta-D-ribosyl)imidazole + S-adenosyl-L-methionine = 4-amino-2-methyl-5-(phosphooxymethyl)pyrimidine + CO + 5'-deoxyadenosine + formate + L-methionine + 3 H(+). It functions in the pathway cofactor biosynthesis; thiamine diphosphate biosynthesis. Functionally, catalyzes the synthesis of the hydroxymethylpyrimidine phosphate (HMP-P) moiety of thiamine from aminoimidazole ribotide (AIR) in a radical S-adenosyl-L-methionine (SAM)-dependent reaction. The chain is Phosphomethylpyrimidine synthase from Rhodopseudomonas palustris (strain HaA2).